The following is a 436-amino-acid chain: Trigger factor (436 aa).

The PPIase FKBP-type domain occupies 161–255 (DDVAIIDFKT…VKEVREKQLP (95 aa)).

This sequence belongs to the FKBP-type PPIase family. Tig subfamily.

The protein localises to the cytoplasm. It carries out the reaction [protein]-peptidylproline (omega=180) = [protein]-peptidylproline (omega=0). Its function is as follows. Involved in protein export. Acts as a chaperone by maintaining the newly synthesized protein in an open conformation. Functions as a peptidyl-prolyl cis-trans isomerase. The polypeptide is Trigger factor (Akkermansia muciniphila (strain ATCC BAA-835 / DSM 22959 / JCM 33894 / BCRC 81048 / CCUG 64013 / CIP 107961 / Muc)).